The following is a 363-amino-acid chain: 3-dehydroquinate synthase (363 aa).

NAD(+) contacts are provided by residues 134–135 (TT), lysine 147, lysine 156, and 174–177 (TLKT). Residues glutamate 189, histidine 254, and histidine 271 each coordinate Zn(2+).

It belongs to the sugar phosphate cyclases superfamily. Dehydroquinate synthase family. It depends on Co(2+) as a cofactor. The cofactor is Zn(2+). Requires NAD(+) as cofactor.

It is found in the cytoplasm. The enzyme catalyses 7-phospho-2-dehydro-3-deoxy-D-arabino-heptonate = 3-dehydroquinate + phosphate. Its pathway is metabolic intermediate biosynthesis; chorismate biosynthesis; chorismate from D-erythrose 4-phosphate and phosphoenolpyruvate: step 2/7. In terms of biological role, catalyzes the conversion of 3-deoxy-D-arabino-heptulosonate 7-phosphate (DAHP) to dehydroquinate (DHQ). The protein is 3-dehydroquinate synthase of Prochlorococcus marinus (strain MIT 9515).